Reading from the N-terminus, the 274-residue chain is Diaminopimelate epimerase (274 aa).

Substrate is bound by residues N11, Q44, and N64. C73 (proton donor) is an active-site residue. Substrate is bound by residues 74-75 (GN), N157, N190, and 208-209 (ER). C217 (proton acceptor) is an active-site residue. 218–219 (GS) is a binding site for substrate.

The protein belongs to the diaminopimelate epimerase family. In terms of assembly, homodimer.

The protein localises to the cytoplasm. It carries out the reaction (2S,6S)-2,6-diaminopimelate = meso-2,6-diaminopimelate. It participates in amino-acid biosynthesis; L-lysine biosynthesis via DAP pathway; DL-2,6-diaminopimelate from LL-2,6-diaminopimelate: step 1/1. Catalyzes the stereoinversion of LL-2,6-diaminopimelate (L,L-DAP) to meso-diaminopimelate (meso-DAP), a precursor of L-lysine and an essential component of the bacterial peptidoglycan. This is Diaminopimelate epimerase from Escherichia coli O81 (strain ED1a).